Consider the following 440-residue polypeptide: Nuclear fusion protein BIK1 (440 aa).

The CAP-Gly domain maps to 26-69; it reads GPVDTKAGMFAGVDLLANIGKNDGSFMGKKYFQTEYPQSGLFIQ. Phosphoserine occurs at positions 95 and 110. Residues 108–157 are disordered; sequence QFSPMDDPKSPTPMRSFRITSRHSGNQQSMDQEASDHHQQQEFGYDNRED. The span at 125-139 shows a compositional bias: polar residues; sequence RITSRHSGNQQSMDQ. Positions 141-157 are enriched in basic and acidic residues; the sequence is ASDHHQQQEFGYDNRED. A coiled-coil region spans residues 190-397; sequence NSSEVTIELR…AQAQTAVESL (208 aa). The CCHC-box motif lies at 416–429; that stretch reads CEHCDTMGHNTAEC.

Its subcellular location is the cytoplasm. The protein localises to the cytoskeleton. It is found in the microtubule organizing center. It localises to the spindle pole body. The protein resides in the spindle. In terms of biological role, required for nuclear fusion, chromosome disjunction, and nuclear segregation during mitosis. Probably required for the formation or stabilization of microtubules during mitosis and for spindle pole body fusion during conjugation. This is Nuclear fusion protein BIK1 (BIK1) from Saccharomyces cerevisiae (strain ATCC 204508 / S288c) (Baker's yeast).